A 141-amino-acid polypeptide reads, in one-letter code: HTH-type transcriptional repressor NsrR (141 aa).

In terms of domain architecture, HTH rrf2-type spans 2–129 (QLTSFTDYGL…DNYTLADMVQ (128 aa)). The segment at residues 28–51 (ISQVTEVYGVSRNHMVKIINQLSR) is a DNA-binding region (H-T-H motif). [2Fe-2S] cluster is bound by residues Cys-91, Cys-96, and Cys-102.

The cofactor is [2Fe-2S] cluster.

Functionally, nitric oxide-sensitive repressor of genes involved in protecting the cell against nitrosative stress. May require iron for activity. The sequence is that of HTH-type transcriptional repressor NsrR from Yersinia enterocolitica serotype O:8 / biotype 1B (strain NCTC 13174 / 8081).